Reading from the N-terminus, the 686-residue chain is Solute carrier family 22 member 23 (686 aa).

Disordered regions lie at residues 1-62 (MAID…GGGP) and 169-193 (GNRSNSSGADGGDTPPLPSPPDKGD). An N-linked (GlcNAc...) asparagine glycan is attached at asparagine 24. Helical transmembrane passes span 234–254 (FSLLVGLIFGYLITGCIADWV) and 258–278 (PVLLFSIIFILIFGLTVALSV). The N-linked (GlcNAc...) asparagine glycan is linked to asparagine 279. The next 8 membrane-spanning stretches (helical) occupy residues 288-308 (FFEGFCLAGIILTLYALRIEL), 315-335 (FMITMVASFVAMAGQFLMPGL), 344-364 (VLQALIICPFLLMLLYWSIFP), 467-487 (ADYYTTASIALVSCLAMCVVV), 494-514 (GGLLLFMILTALASLLQLGLL), 538-558 (IAFSIVGMFASHAVGSLSVFF), 569-589 (CGGLGLVLASAGFGMLTAPII), and 598-618 (FLHHIIFACCTLICIICILLL).

Belongs to the major facilitator (TC 2.A.1) superfamily. Organic cation transporter (TC 2.A.1.19) family.

It localises to the membrane. The polypeptide is Solute carrier family 22 member 23 (SLC22A23) (Homo sapiens (Human)).